Here is a 284-residue protein sequence, read N- to C-terminus: D-tagatose-1,6-bisphosphate aldolase subunit GatY (284 aa).

Catalysis depends on aspartate 82, which acts as the Proton donor. Zn(2+) is bound by residues histidine 83 and histidine 180. Glycine 181 contributes to the dihydroxyacetone phosphate binding site. Histidine 208 is a binding site for Zn(2+). Residues 209–211 (GAS) and 230–233 (NVAT) each bind dihydroxyacetone phosphate.

This sequence belongs to the class II fructose-bisphosphate aldolase family. TagBP aldolase GatY subfamily. Forms a complex with GatZ. The cofactor is Zn(2+).

The catalysed reaction is D-tagatofuranose 1,6-bisphosphate = D-glyceraldehyde 3-phosphate + dihydroxyacetone phosphate. It participates in carbohydrate metabolism; D-tagatose 6-phosphate degradation; D-glyceraldehyde 3-phosphate and glycerone phosphate from D-tagatose 6-phosphate: step 2/2. Functionally, catalytic subunit of the tagatose-1,6-bisphosphate aldolase GatYZ, which catalyzes the reversible aldol condensation of dihydroxyacetone phosphate (DHAP or glycerone-phosphate) with glyceraldehyde 3-phosphate (G3P) to produce tagatose 1,6-bisphosphate (TBP). Requires GatZ subunit for full activity and stability. Is involved in the catabolism of galactitol. In Shigella flexneri, this protein is D-tagatose-1,6-bisphosphate aldolase subunit GatY.